The following is an 839-amino-acid chain: Toll-like receptor 4 (839 aa).

The first 23 residues, 1-23 (MMSASRLAGTLIPAMAFLSCVRP), serve as a signal peptide directing secretion. The Extracellular segment spans residues 24 to 631 (ESWEPCVEVV…SLNITCQMNK (608 aa)). A disulfide bridge links cysteine 29 with cysteine 40. Asparagine 35 is a glycosylation site (N-linked (GlcNAc...) asparagine). LRR repeat units follow at residues 55–76 (STKN…SFFS), 79–100 (ELQV…AYQS), 103–124 (HLST…AFSG), 127–148 (SLQK…PIGH), and 151–172 (TLKE…EYFS). N-linked (GlcNAc...) asparagine glycosylation occurs at asparagine 173. LRR repeat units follow at residues 176–199 (NLEH…RVLH), 205–225 (NLSL…AFKE), and 227–247 (RLHK…KTCI). The N-linked (GlcNAc...) asparagine glycan is linked to asparagine 205. Cysteine 281 and cysteine 306 form a disulfide bridge. Residues asparagine 282 and asparagine 309 are each glycosylated (N-linked (GlcNAc...) asparagine). LRR repeat units lie at residues 331–351 (GWQH…LKLK), 352–373 (SLKR…VDLP), 374–394 (SLEF…CSQS), 400–422 (SLKY…LGLE), 423–444 (QLEH…SVFL), 448–456 (NLIYLDISH), 472–495 (SLEV…FTEL), 497–518 (NLTF…AFNS), 521–542 (SLQV…PYKC), and 545–565 (SLQV…QELQ). Residues cysteine 390 and cysteine 391 are joined by a disulfide bond. N-linked (GlcNAc...) asparagine glycosylation is found at asparagine 497 and asparagine 526. Asparagine 575 carries an N-linked (GlcNAc...) asparagine glycan. The LRRCT domain occupies 579–629 (NDFACTCEHQSFLQWIKDQRQLLVEVERMECATPSDKQGMPVLSLNITCQM). 2 disulfides stabilise this stretch: cysteine 583–cysteine 609 and cysteine 585–cysteine 627. Asparagine 624 and asparagine 630 each carry an N-linked (GlcNAc...) asparagine glycan. A helical membrane pass occupies residues 632-652 (TIIGVSVLSVLVVSVVAVLVY). At 653–839 (KFYFHLMLLA…GCNWQEATSI (187 aa)) the chain is on the cytoplasmic side. The 144-residue stretch at 672–815 (NIYDAFVIYS…IFWRRLRKAL (144 aa)) folds into the TIR domain.

This sequence belongs to the Toll-like receptor family. As to quaternary structure, belongs to the lipopolysaccharide (LPS) receptor, a multi-protein complex containing at least CD14, LY96 and TLR4. Binding to bacterial LPS leads to homodimerization. Interacts with LY96 via the extracellular domain. Interacts with MYD88 and TIRAP via their respective TIR domains. Interacts with NOX4. Interacts with CNPY3 and HSP90B1; this interaction is required for proper folding in the endoplasmic reticulum. Interacts with MAP3K21; this interaction leads to negative regulation of TLR4 signaling. Interacts with CD36, following CD36 stimulation by oxLDL or amyloid-beta 42, and forms a heterodimer with TLR6. The trimeric complex is internalized and triggers inflammatory response. LYN kinase activity facilitates TLR4-TLR6 heterodimerization and signal initiation. Interacts with TICAM1 in response to LPS in a WDFY1-dependent manner. Interacts with WDFY1 in response to LPS. Interacts with SMPDL3B. Interacts with CEACAM1; upon lipopolysaccharide stimulation, forms a complex including TLR4 and the phosphorylated form of SYK and CEACAM1, which in turn, recruits PTPN6 that dephosphorylates SYK, reducing the production of reactive oxygen species (ROS) and lysosome disruption, which in turn, reduces the activity of the inflammasome. Interacts with RFTN1; the interaction occurs in response to lipopolysaccharide stimulation. Interacts with SCIMP; the interaction occurs in response to lipopolysaccharide stimulation and is enhanced by phosphorylation of SCIMP by LYN. This interaction facilitates the phosphorylation of TLR4 by LYN which elicits a selective cytokine response in macrophages. Interacts with TRAF3IP3. Interacts with TREM1; this interaction enhances TLR4-mediated inflammatory response. Interacts with ZG16B/PAUF. Interacts with CD82; this interaction inhibits TLR4-mediated signaling pathway. In terms of processing, phosphorylated on tyrosine residues by LYN after binding lipopolysaccharide. Post-translationally, ubiquitinated by RNF128 via 'Lys-28'-linked polyubiquitin chains, leading to proteasomal degradation.

The protein localises to the cell membrane. Its subcellular location is the early endosome. It is found in the cell projection. The protein resides in the ruffle. In terms of biological role, transmembrane receptor that functions as a pattern recognition receptor recognizing pathogen- and damage-associated molecular patterns (PAMPs and DAMPs) to induce innate immune responses via downstream signaling pathways. At the plasma membrane, cooperates with LY96 to mediate the innate immune response to bacterial lipopolysaccharide (LPS). Also involved in LPS-independent inflammatory responses triggered by free fatty acids, such as palmitate, and Ni(2+). Mechanistically, acts via MYD88, TIRAP and TRAF6, leading to NF-kappa-B activation, cytokine secretion and the inflammatory response. Alternatively, CD14-mediated TLR4 internalization via endocytosis is associated with the initiation of a MYD88-independent signaling via the TICAM1-TBK1-IRF3 axis leading to type I interferon production. In addition to the secretion of proinflammatory cytokines, initiates the activation of NLRP3 inflammasome and formation of a positive feedback loop between autophagy and NF-kappa-B signaling cascade. In complex with TLR6, promotes inflammation in monocytes/macrophages by associating with TLR6 and the receptor CD86. Upon ligand binding, such as oxLDL or amyloid-beta 42, the TLR4:TLR6 complex is internalized and triggers inflammatory response, leading to NF-kappa-B-dependent production of CXCL1, CXCL2 and CCL9 cytokines, via MYD88 signaling pathway, and CCL5 cytokine, via TICAM1 signaling pathway. In myeloid dendritic cells, vesicular stomatitis virus glycoprotein G but not LPS promotes the activation of IRF7, leading to type I IFN production in a CD14-dependent manner. The polypeptide is Toll-like receptor 4 (TLR4) (Pan paniscus (Pygmy chimpanzee)).